The following is an 845-amino-acid chain: Protein kintoun (845 aa).

Positions 362–382 (SKEQAQMHETLRHFSREDSGV) are enriched in basic and acidic residues. Disordered stretches follow at residues 362-420 (SKEQ…PVRH), 575-691 (QALK…SMSD), and 773-845 (AQHR…EMDD). Position 380 is a phosphoserine (serine 380). Acidic residues predominate over residues 391-400 (PVEEDPDGEL). Over residues 584–593 (GTKEEEKENQ) the composition is skewed to basic and acidic residues. Over residues 611–622 (KPGKKQRKRNKK) the composition is skewed to basic residues. Over residues 640-671 (LTKNSELQPKSTFNLPQRKQRSYSECNDSTGG) the composition is skewed to polar residues. A Phosphoserine modification is found at serine 779. Over residues 794 to 804 (LKQQENQSRNC) the composition is skewed to polar residues.

It belongs to the PIH1 family. Kintoun subfamily. Interacts with Pp1alpha-96A, Pp1-87B, Pp1-13C and flw.

Its subcellular location is the cytoplasm. Functionally, required for cytoplasmic pre-assembly of axonemal dyneins, thereby playing a central role in motility in cilia and flagella. Involved in pre-assembly of dynein arm complexes in the cytoplasm before intraflagellar transport loads them for the ciliary compartment. This Drosophila erecta (Fruit fly) protein is Protein kintoun.